We begin with the raw amino-acid sequence, 239 residues long: Uridylate kinase (239 aa).

10–13 lines the ATP pocket; that stretch reads KLSG. Positions 18 to 23 are involved in allosteric activation by GTP; the sequence is GEQGYG. A UMP-binding site is contributed by glycine 52. ATP is bound by residues glycine 53 and arginine 57. UMP-binding positions include aspartate 72 and 133-140; that span reads TGNPYFST. ATP-binding residues include asparagine 161, tyrosine 167, and glutamate 170.

This sequence belongs to the UMP kinase family. As to quaternary structure, homohexamer.

The protein localises to the cytoplasm. It carries out the reaction UMP + ATP = UDP + ADP. It functions in the pathway pyrimidine metabolism; CTP biosynthesis via de novo pathway; UDP from UMP (UMPK route): step 1/1. With respect to regulation, allosterically activated by GTP. Inhibited by UTP. In terms of biological role, catalyzes the reversible phosphorylation of UMP to UDP. This Halalkalibacterium halodurans (strain ATCC BAA-125 / DSM 18197 / FERM 7344 / JCM 9153 / C-125) (Bacillus halodurans) protein is Uridylate kinase.